The following is a 148-amino-acid chain: Small ribosomal subunit protein eS19 (148 aa).

Positions 79–90 (HGSTKNRGSRPA) are enriched in basic residues. Disordered stretches follow at residues 79–98 (HGSTKNRGSRPAHHVDASGA) and 116–148 (DEEKGGRRITQSGQRDLDRIAKTTVDEEEEDDE). Residues 130-140 (RDLDRIAKTTV) show a composition bias toward basic and acidic residues.

This sequence belongs to the eukaryotic ribosomal protein eS19 family.

This chain is Small ribosomal subunit protein eS19 (rps19), found in Emericella nidulans (strain FGSC A4 / ATCC 38163 / CBS 112.46 / NRRL 194 / M139) (Aspergillus nidulans).